A 180-amino-acid chain; its full sequence is Probable DNA replication complex GINS protein PSF2 (180 aa).

This sequence belongs to the GINS2/PSF2 family. As to quaternary structure, component of the GINS complex which is a heterotetramer of gins1, gins2, gins3 and gins4.

The protein localises to the nucleus. Its function is as follows. Required for correct functioning of the GINS complex, a complex that plays an essential role in the initiation of DNA replication, and progression of DNA replication forks. GINS complex is a core component of CDC45-MCM-GINS (CMG) helicase, the molecular machine that unwinds template DNA during replication, and around which the replisome is built. The chain is Probable DNA replication complex GINS protein PSF2 (psf-2) from Caenorhabditis elegans.